The primary structure comprises 202 residues: Adenosylcobalamin/alpha-ribazole phosphatase (202 aa).

H8 (tele-phosphohistidine intermediate) is an active-site residue. E81 functions as the Proton donor/acceptor in the catalytic mechanism.

The protein belongs to the phosphoglycerate mutase family. As to quaternary structure, monomer.

It catalyses the reaction adenosylcob(III)alamin 5'-phosphate + H2O = adenosylcob(III)alamin + phosphate. The catalysed reaction is alpha-ribazole 5'-phosphate + H2O = alpha-ribazole + phosphate. It participates in nucleoside biosynthesis; alpha-ribazole biosynthesis; alpha-ribazole from 5,6-dimethylbenzimidazole: step 2/2. Catalyzes the conversion of adenosylcobalamin 5'-phosphate to adenosylcobalamin (vitamin B12); involved in the assembly of the nucleotide loop of cobalamin. Also catalyzes the hydrolysis of the phospho group from alpha-ribazole 5'-phosphate to form alpha-ribazole. The chain is Adenosylcobalamin/alpha-ribazole phosphatase (cobC) from Salmonella typhimurium (strain LT2 / SGSC1412 / ATCC 700720).